The chain runs to 132 residues: Large-conductance mechanosensitive channel (132 aa).

3 consecutive transmembrane segments (helical) span residues 14 to 34 (VLDM…VDSL), 39 to 59 (INPI…AVTI), and 68 to 88 (IGNF…VFLI).

Belongs to the MscL family. Homopentamer.

The protein resides in the cell membrane. In terms of biological role, channel that opens in response to stretch forces in the membrane lipid bilayer. May participate in the regulation of osmotic pressure changes within the cell. In Latilactobacillus sakei subsp. sakei (strain 23K) (Lactobacillus sakei subsp. sakei), this protein is Large-conductance mechanosensitive channel.